The primary structure comprises 475 residues: MGTQHRIKVDVPDRVLYTVGSCVLVIGSIGITGNLLVLYAFYSNKRLRTPANYFIMNLAASDFLMSATQAPICFLNSMHTEWILGDIGCNFYVFCGALFGITSMMTLLAISVDRYCVITKPLQSIKRSSKKRSCIIIAFVWLYSLGWSVCPLFGWSSYIPEGLMISCTWDYVSYSPANRSYTMMLCCFVFFIPLIIIFHCYLFMFLAIRSTGRNVQKLGSTYNRKSNVSQSVKSEWKLAKIAFVAIVVFVLSWSPYACVTLIAWAGYAKTLNPYSKSVPAVIAKASAIYNPIIYAIIHPRYRRTIRSAVPCLRFLIRISPSDLSTSSVNESSFRASMSSRHSFAARNKSSCVSSISAAETTWSDMELEPVEAARKKQQPHRSRSFSKQAEEETGLLLKTQSCNVLTGEKVAVSSISLHDPFERSFGENAPELLLRPSCLRTSSLPFGLNSSSTEENADTSDMEVQEQHQMEASSH.

Residues 1–21 (MGTQHRIKVDVPDRVLYTVGS) lie on the Extracellular side of the membrane. Residues 22 to 42 (CVLVIGSIGITGNLLVLYAFY) traverse the membrane as a helical segment. Topologically, residues 43 to 53 (SNKRLRTPANY) are cytoplasmic. A helical membrane pass occupies residues 54 to 74 (FIMNLAASDFLMSATQAPICF). Residues 75–90 (LNSMHTEWILGDIGCN) are Extracellular-facing. C89 and C167 form a disulfide bridge. The helical transmembrane segment at 91–111 (FYVFCGALFGITSMMTLLAIS) threads the bilayer. The Cytoplasmic segment spans residues 112-134 (VDRYCVITKPLQSIKRSSKKRSC). The chain crosses the membrane as a helical span at residues 135 to 155 (IIIAFVWLYSLGWSVCPLFGW). Residues 156–187 (SSYIPEGLMISCTWDYVSYSPANRSYTMMLCC) lie on the Extracellular side of the membrane. N-linked (GlcNAc...) asparagine glycosylation occurs at N178. Residues 188–208 (FVFFIPLIIIFHCYLFMFLAI) form a helical membrane-spanning segment. Over 209-240 (RSTGRNVQKLGSTYNRKSNVSQSVKSEWKLAK) the chain is Cytoplasmic. A helical membrane pass occupies residues 241-261 (IAFVAIVVFVLSWSPYACVTL). The Extracellular portion of the chain corresponds to 262 to 276 (IAWAGYAKTLNPYSK). A helical transmembrane segment spans residues 277-297 (SVPAVIAKASAIYNPIIYAII). K284 is modified (N6-(retinylidene)lysine). The Cytoplasmic segment spans residues 298–475 (HPRYRRTIRS…EQHQMEASSH (178 aa)). Disordered regions lie at residues 370–390 (VEAA…KQAE) and 445–475 (PFGL…ASSH). The span at 375-384 (KKQQPHRSRS) shows a compositional bias: basic residues. Residues 445-454 (PFGLNSSSTE) are compositionally biased toward polar residues. The segment covering 455–464 (ENADTSDMEV) has biased composition (acidic residues). Basic and acidic residues predominate over residues 465 to 475 (QEQHQMEASSH).

The protein belongs to the G-protein coupled receptor 1 family. Opsin subfamily. As to expression, highest level in the lateral eye. Low level in the brain.

The protein localises to the cell membrane. Its function is as follows. Photoreceptor implicated in non-image-forming responses to light. May be able to isomerize covalently bound all-trans retinal back to 11-cis retinal. In Podarcis siculus (Italian wall lizard), this protein is Melanopsin (OPN4).